The chain runs to 341 residues: HTH-type transcriptional repressor PurR (341 aa).

The region spanning 2-56 (ATIKDVAKRANVSTTTVSHVINKTRFVAEETRNAVWAAIKELHYSPSAVARSLKV) is the HTH lacI-type domain. The segment at residues 4 to 23 (IKDVAKRANVSTTTVSHVIN) is a DNA-binding region (H-T-H motif). The DNA-binding element occupies 48-56 (SAVARSLKV). Hypoxanthine-binding residues include Tyr-73, Arg-190, Thr-192, Phe-221, and Asp-275.

In terms of assembly, homodimer.

Its pathway is purine metabolism; purine nucleotide biosynthesis [regulation]. Is the main repressor of the genes involved in the de novo synthesis of purine nucleotides, regulating purB, purC, purEK, purF, purHD, purL, purMN and guaBA expression. PurR is allosterically activated to bind its cognate DNA by binding the purine corepressors, hypoxanthine or guanine, thereby effecting transcription repression. This chain is HTH-type transcriptional repressor PurR, found in Klebsiella pneumoniae (strain 342).